A 2207-amino-acid chain; its full sequence is Desmoplakin-B (2207 aa).

Coiled-coil stretches lie at residues 506-916 (MEEL…EAGK), 952-1000 (AKHA…EQGR), and 1029-1063 (TERLQRLTETLTKDRQRVEEELRAVRLEHEELLKN). Basic and acidic residues predominate over residues 905–924 (KQRQVAEEEAGKRRRTESQL). The disordered stretch occupies residues 905–933 (KQRQVAEEEAGKRRRTESQLEKSSQAMRE). Plectin repeat units lie at residues 1369–1406 (LLEAQAATGYIIDPQANTKMTVEEACLNGVVDEADKKQ), 1407–1445 (LLIAEAACVGFRDPKTAKLLPVSQAMKKGIIDRETTLRL), 1446–1483 (LQAQEAAGGILDPILSVYLPKDTAMDRDLVDEDLYQAL), 1571–1609 (YLRGSTCIAGIYDEAGECTLPIYQAMKNGLLRPGTTLEL), 1610–1647 (LEAQAASGFVIDPINNEYYTVEEACQKGLVGVEFKDKL), 1685–1723 (LLEAQIASGGIIDPKHSHRIDVDVAYQRGYFDQGMNQIL), 1783–1811 (IVDPDSNKEMTVREAYEKKLIDYETFLEL), 1992–2029 (LLEAQACTGGIVSPDNGRRMSIQEATRVGVLDDEMANR), and 2068–2106 (FLEFQYLTGGLFDPELGCRRSLEEALQMGWLDMRAAQRL). The segment covering 2155-2164 (ISSPYNLSNP) has biased composition (polar residues). The tract at residues 2155–2207 (ISSPYNLSNPGSASGSRSGSRRGSVDYSLSPSSSSRYSSFSYSRTSFSSRSLS) is disordered. Residues 2165–2207 (GSASGSRSGSRRGSVDYSLSPSSSSRYSSFSYSRTSFSSRSLS) are compositionally biased toward low complexity.

The protein belongs to the plakin or cytolinker family.

Its subcellular location is the cell junction. The protein localises to the desmosome. The protein resides in the cell membrane. Its function is as follows. Involved in the organization of desmosome cell-cell junctions. Of particular importance in cell adhesion in the skin and during cardiac development. May also play a role in the regulation of Wnt, TGF-beta and Hippo signaling pathways. The sequence is that of Desmoplakin-B from Danio rerio (Zebrafish).